The sequence spans 237 residues: uncharacterized protein (237 aa).

50 to 57 (APPGTGKS) serves as a coordination point for ATP.

This is an uncharacterized protein from Escherichia coli (strain K12).